Consider the following 80-residue polypeptide: Cytochrome c oxidase subunit 7B, mitochondrial (80 aa).

The transit peptide at 1–24 (MLPLAKNALSRLQVRSIQQVVARQ) directs the protein to the mitochondrion. Residues 25 to 39 (SHQKRAPSFHDKYGN) lie on the Mitochondrial matrix side of the membrane. Residues 40–60 (AILAGGAIFCVSTWTYTATQI) traverse the membrane as a helical segment. The Mitochondrial intermembrane segment spans residues 61–80 (GIEWNMSPVGRVTPKEWRDQ).

The protein belongs to the cytochrome c oxidase VIIb family. In terms of assembly, component of the cytochrome c oxidase (complex IV, CIV), a multisubunit enzyme composed of 14 subunits. The complex is composed of a catalytic core of 3 subunits MT-CO1, MT-CO2 and MT-CO3, encoded in the mitochondrial DNA, and 11 supernumerary subunits COX4I, COX5A, COX5B, COX6A, COX6B, COX6C, COX7A, COX7B, COX7C, COX8 and NDUFA4, which are encoded in the nuclear genome. The complex exists as a monomer or a dimer and forms supercomplexes (SCs) in the inner mitochondrial membrane with NADH-ubiquinone oxidoreductase (complex I, CI) and ubiquinol-cytochrome c oxidoreductase (cytochrome b-c1 complex, complex III, CIII), resulting in different assemblies (supercomplex SCI(1)III(2)IV(1) and megacomplex MCI(2)III(2)IV(2)).

The protein resides in the mitochondrion inner membrane. It participates in energy metabolism; oxidative phosphorylation. In terms of biological role, component of the cytochrome c oxidase, the last enzyme in the mitochondrial electron transport chain which drives oxidative phosphorylation. The respiratory chain contains 3 multisubunit complexes succinate dehydrogenase (complex II, CII), ubiquinol-cytochrome c oxidoreductase (cytochrome b-c1 complex, complex III, CIII) and cytochrome c oxidase (complex IV, CIV), that cooperate to transfer electrons derived from NADH and succinate to molecular oxygen, creating an electrochemical gradient over the inner membrane that drives transmembrane transport and the ATP synthase. Cytochrome c oxidase is the component of the respiratory chain that catalyzes the reduction of oxygen to water. Electrons originating from reduced cytochrome c in the intermembrane space (IMS) are transferred via the dinuclear copper A center (CU(A)) of subunit 2 and heme A of subunit 1 to the active site in subunit 1, a binuclear center (BNC) formed by heme A3 and copper B (CU(B)). The BNC reduces molecular oxygen to 2 water molecules using 4 electrons from cytochrome c in the IMS and 4 protons from the mitochondrial matrix. Plays a role in proper central nervous system (CNS) development in vertebrates. The chain is Cytochrome c oxidase subunit 7B, mitochondrial (Cox7b) from Mus musculus (Mouse).